A 233-amino-acid polypeptide reads, in one-letter code: MGQKVHPNGIRLGIVKPWNSTWYANTKEFADNLDSDFKVRQFLNKELEKASVSRIVIERPAKSIRVTIHTARPGIVIGKKGEDVEKLRKGVAEIAGVPAQINIAEVRKPELDAKLVADSITSQLERRVMFRRAMKRAVQNAMRLGAKGIKVEVSGRLGGAEIARTEWYREGRVPLHTLRADIDYNTSEAHTTYGVIGVKVWIFKGEILGGMAAVEQPEKPAAQPKKQQRKGRK.

Residues 39–107 (VRQFLNKELE…PAQINIAEVR (69 aa)) form the KH type-2 domain.

This sequence belongs to the universal ribosomal protein uS3 family. As to quaternary structure, part of the 30S ribosomal subunit. Forms a tight complex with proteins S10 and S14.

Binds the lower part of the 30S subunit head. Binds mRNA in the 70S ribosome, positioning it for translation. The protein is Small ribosomal subunit protein uS3 of Edwardsiella ictaluri (strain 93-146).